Reading from the N-terminus, the 278-residue chain is Large ribosomal subunit protein uL2 (278 aa).

A compositionally biased stretch (basic residues) spans 210–219; that stretch reads RKRWLGKRPQ. The disordered stretch occupies residues 210–278; that stretch reads RKRWLGKRPQ…LIIRHRKGSK (69 aa). Residues 258 to 270 are compositionally biased toward basic and acidic residues; that stretch reads KTRDVKKASEKLI.

Belongs to the universal ribosomal protein uL2 family. In terms of assembly, part of the 50S ribosomal subunit. Forms a bridge to the 30S subunit in the 70S ribosome.

In terms of biological role, one of the primary rRNA binding proteins. Required for association of the 30S and 50S subunits to form the 70S ribosome, for tRNA binding and peptide bond formation. It has been suggested to have peptidyltransferase activity; this is somewhat controversial. Makes several contacts with the 16S rRNA in the 70S ribosome. The sequence is that of Large ribosomal subunit protein uL2 from Lactobacillus acidophilus (strain ATCC 700396 / NCK56 / N2 / NCFM).